The following is a 183-amino-acid chain: Ribosome maturation factor RimM (183 aa).

A PRC barrel domain is found at 95–171; that stretch reads DPDEFYDHEL…VVVIDPPEGL (77 aa).

This sequence belongs to the RimM family. As to quaternary structure, binds ribosomal protein uS19.

Its subcellular location is the cytoplasm. Its function is as follows. An accessory protein needed during the final step in the assembly of 30S ribosomal subunit, possibly for assembly of the head region. Essential for efficient processing of 16S rRNA. May be needed both before and after RbfA during the maturation of 16S rRNA. It has affinity for free ribosomal 30S subunits but not for 70S ribosomes. The chain is Ribosome maturation factor RimM from Rhodococcus opacus (strain B4).